The sequence spans 87 residues: Apolipoprotein C-I (87 aa).

The first 26 residues, 1–26 (MRFILSLPVLAVVLAMVLEGPAPAQA), serve as a signal peptide directing secretion.

This sequence belongs to the apolipoprotein C1 family.

The protein localises to the secreted. In terms of biological role, inhibitor of lipoprotein binding to the low density lipoprotein (LDL) receptor, LDL receptor-related protein, and very low density lipoprotein (VLDL) receptor. Associates with high density lipoproteins (HDL) and the triacylglycerol-rich lipoproteins in the plasma and makes up about 10% of the protein of the VLDL and 2% of that of HDL. Appears to interfere directly with fatty acid uptake and is also the major plasma inhibitor of cholesteryl ester transfer protein (CETP). Binds free fatty acids and reduces their intracellular esterification. Modulates the interaction of APOE with beta-migrating VLDL and inhibits binding of beta-VLDL to the LDL receptor-related protein. This is Apolipoprotein C-I (APOC1) from Pteropus alecto (Black flying fox).